Reading from the N-terminus, the 692-residue chain is Methionine--tRNA ligase (692 aa).

The 'HIGH' region signature appears at Pro12–His22. Residues Cys143, Cys146, Cys156, and Cys159 each contribute to the Zn(2+) site. The short motif at Lys341 to Ser345 is the 'KMSKS' region element. Lys344 lines the ATP pocket. The tRNA-binding domain maps to Asp586–Arg692.

The protein belongs to the class-I aminoacyl-tRNA synthetase family. MetG type 1 subfamily. Homodimer. It depends on Zn(2+) as a cofactor.

It localises to the cytoplasm. The catalysed reaction is tRNA(Met) + L-methionine + ATP = L-methionyl-tRNA(Met) + AMP + diphosphate. In terms of biological role, is required not only for elongation of protein synthesis but also for the initiation of all mRNA translation through initiator tRNA(fMet) aminoacylation. The polypeptide is Methionine--tRNA ligase (Bordetella bronchiseptica (strain ATCC BAA-588 / NCTC 13252 / RB50) (Alcaligenes bronchisepticus)).